Here is an 89-residue protein sequence, read N- to C-terminus: Acylphosphatase (89 aa).

Residues 3-89 (HIHLQVFGRV…NQKLSDFRSI (87 aa)) form the Acylphosphatase-like domain. Active-site residues include Arg18 and Asn36.

This sequence belongs to the acylphosphatase family.

The enzyme catalyses an acyl phosphate + H2O = a carboxylate + phosphate + H(+). The protein is Acylphosphatase (acyP) of Staphylococcus aureus (strain Mu3 / ATCC 700698).